The primary structure comprises 828 residues: Periplasmic nitrate reductase (828 aa).

The segment at residues 1-31 (MKLSRRSFMKANAVAAAAAAAGLSVPGVARA) is a signal peptide (tat-type signal). Positions 39-95 (IKWDKAPCRFCGTGCGVLVGTQQGRVVACQGDPDAPVNRGLNCIKGYFLPKIMYGKD) constitute a 4Fe-4S Mo/W bis-MGD-type domain. Residues Cys-46, Cys-49, Cys-53, and Cys-81 each contribute to the [4Fe-4S] cluster site. Mo-bis(molybdopterin guanine dinucleotide) contacts are provided by residues Lys-83, Gln-150, Asn-175, Cys-179, 212–219 (WGANMAEM), 243–247 (STYQH), 262–264 (QSD), Met-372, Gln-376, Asn-482, 508–509 (SD), Lys-531, Asp-558, and 718–727 (TGRVLEHWHT). Phe-794 is a binding site for substrate. 2 residues coordinate Mo-bis(molybdopterin guanine dinucleotide): Asn-802 and Lys-819.

This sequence belongs to the prokaryotic molybdopterin-containing oxidoreductase family. NasA/NapA/NarB subfamily. As to quaternary structure, component of the periplasmic nitrate reductase NapAB complex composed of NapA and NapB. [4Fe-4S] cluster serves as cofactor. Requires Mo-bis(molybdopterin guanine dinucleotide) as cofactor. Post-translationally, predicted to be exported by the Tat system. The position of the signal peptide cleavage has not been experimentally proven.

The protein localises to the periplasm. It carries out the reaction 2 Fe(II)-[cytochrome] + nitrate + 2 H(+) = 2 Fe(III)-[cytochrome] + nitrite + H2O. Functionally, catalytic subunit of the periplasmic nitrate reductase complex NapAB. Receives electrons from NapB and catalyzes the reduction of nitrate to nitrite. In Escherichia coli O9:H4 (strain HS), this protein is Periplasmic nitrate reductase.